A 662-amino-acid chain; its full sequence is Sodium/glucose cotransporter 1 (662 aa).

The Extracellular portion of the chain corresponds to 1 to 24 (MDSSTWSPATTATTEPLKPHERIR). A helical transmembrane segment spans residues 25–47 (NAADISVIVIYFVVVMAVGLWAM). Residues 48-66 (CSTNRGTVGGFFLAGRSMV) lie on the Cytoplasmic side of the membrane. A helical transmembrane segment spans residues 67–90 (WWPVGASLFASNIGSGHFVGLAGT). At 91 to 95 (GAAAG) the chain is on the extracellular side. The chain crosses the membrane as a helical span at residues 96 to 117 (IATGGFEWNALIWVVVLGWLFV). The Cytoplasmic segment spans residues 118 to 139 (PIYIKAGVVTMPEYLRKRFGGK). A helical membrane pass occupies residues 140–169 (RIQVYLSILSLMLYIFTKISADIFSGAIFI). Topologically, residues 170 to 176 (TLALGLD) are extracellular. Residues 177–193 (LYLAIFLLLAITGLYTI) form a helical membrane-spanning segment. Residues 194 to 202 (TGGLAAVIY) lie on the Cytoplasmic side of the membrane. A helical membrane pass occupies residues 203-221 (TDTLQTAIMLVGSFILTGF). At 222-275 (AFHEVGGYDAFMEKYMNAIPTVISDGNITIKKECYTPRADSFHIFRDPLKGDLP) the chain is on the extracellular side. An N-linked (GlcNAc...) asparagine glycan is attached at N248. 5 cysteine pairs are disulfide-bonded: C255/C511, C255/C608, C345/C351, C355/C361, and C517/C522. The chain crosses the membrane as a helical span at residues 276 to 295 (WPGLTFGLSILALWYWCTDQ). Over 296–309 (VIVQRCLSAKNMSH) the chain is Cytoplasmic. Residues 310 to 331 (VKAGCVMCGYFKLLPMFVIVMP) traverse the membrane as a helical segment. The Extracellular segment spans residues 332 to 375 (GMISRVLYTEKIACTVPSECEKYCGTKVGCSNIAYPTLVVELMP). Residues 376 to 406 (NGLRGLMLSVMLASLMSSLTSIFNSASTLFT) traverse the membrane as a helical segment. At 407–422 (MDVYTKIRKRASEKEL) the chain is on the cytoplasmic side. A helical transmembrane segment spans residues 423-444 (MIAGRLFILVLIGISIAWVPIV). Over 445-451 (QSAQSGQ) the chain is Extracellular. The chain crosses the membrane as a helical span at residues 452–477 (LFDYIQSVTSYLGPPIAAVFLLAIFC). Residues 478-481 (KRVN) are Cytoplasmic-facing. A helical membrane pass occupies residues 482–504 (EEGAFWGLVIGCMIGLARMITEF). The Extracellular portion of the chain corresponds to 505-525 (AYGTGSCVEPSNCPTIICGVH). Residues 526-547 (YLYFAIILFVISIIIVLVVSLF) form a helical membrane-spanning segment. The Cytoplasmic portion of the chain corresponds to 548-642 (TKPIPDVHLY…TSEKPLWRTV (95 aa)). The residue at position 587 (T587) is a Phosphothreonine. A helical membrane pass occupies residues 643–660 (VNINGIILLTVAVFCHAY). Residues 661–662 (FA) lie on the Extracellular side of the membrane.

It belongs to the sodium:solute symporter (SSF) (TC 2.A.21) family. Post-translationally, N-glycosylation is not necessary for the cotransporter function.

It localises to the apical cell membrane. The enzyme catalyses D-glucose(out) + 2 Na(+)(out) = D-glucose(in) + 2 Na(+)(in). It catalyses the reaction D-galactose(out) + 2 Na(+)(out) = D-galactose(in) + 2 Na(+)(in). Enhanced by the interaction with PDZK1IP1/MAP17; but unlike SLC5A2/SGLT2, PDZK1IP1 is not essential for SLC5A1 transporter activity. Possibly modulated by cholesterol binding. In terms of biological role, electrogenic Na(+)-coupled sugar symporter that actively transports D-glucose or D-galactose at the plasma membrane, with a Na(+) to sugar coupling ratio of 2:1. Transporter activity is driven by a transmembrane Na(+) electrochemical gradient set by the Na(+)/K(+) pump. Has a primary role in the transport of dietary monosaccharides from enterocytes to blood. Responsible for the absorption of D-glucose or D-galactose across the apical brush-border membrane of enterocytes, whereas basolateral exit is provided by GLUT2. Additionally, functions as a D-glucose sensor in enteroendocrine cells, triggering the secretion of the incretins GCG and GIP that control food intake and energy homeostasis. Together with SGLT2, functions in reabsorption of D-glucose from glomerular filtrate, playing a nonredundant role in the S3 segment of the proximal tubules. Transports D-glucose into endometrial epithelial cells, controlling glycogen synthesis and nutritional support for the embryo as well as the decidual transformation of endometrium prior to conception. Acts as a water channel enabling passive water transport in response to the osmotic gradient created upon sugar and Na(+) uptake. Has high water conductivity comparable to aquaporins and therefore is expected to play an important role in transepithelial water permeability, especially in the small intestine. In Sus scrofa (Pig), this protein is Sodium/glucose cotransporter 1 (SLC5A1).